The chain runs to 722 residues: D-(-)-3-hydroxybutyrate oligomer hydrolase (722 aa).

An N-terminal signal peptide occupies residues 1–25 (MKTMQGKGSGRRLRGALLVTMAASG). Residue Ser-319 is the Charge relay system of the active site.

This sequence belongs to the D-(-)-3-hydroxybutyrate oligomer hydrolase family.

It is found in the secreted. It catalyses the reaction (3R)-hydroxybutanoate dimer + H2O = 2 (R)-3-hydroxybutanoate + H(+). The protein operates within lipid metabolism; butanoate metabolism. Inhibited by diisopropylfluorophosphate (DFP). In terms of biological role, participates in the degradation of poly-3-hydroxybutyrate (PHB). It works downstream of poly(3-hydroxybutyrate) depolymerase, hydrolyzing D(-)-3-hydroxybutyrate oligomers of various length (3HB-oligomers) into 3HB-monomers. This is D-(-)-3-hydroxybutyrate oligomer hydrolase from Ralstonia pickettii (Burkholderia pickettii).